The following is a 165-amino-acid chain: Large ribosomal subunit protein uL11A (165 aa).

An N5-methylarginine modification is found at Arg67.

It belongs to the universal ribosomal protein uL11 family. Component of the large ribosomal subunit (LSU). Mature yeast ribosomes consist of a small (40S) and a large (60S) subunit. The 40S small subunit contains 1 molecule of ribosomal RNA (18S rRNA) and at least 33 different proteins. The large 60S subunit contains 3 rRNA molecules (25S, 5.8S and 5S rRNA) and at least 46 different proteins.

It localises to the cytoplasm. The protein localises to the nucleus. Its subcellular location is the nucleolus. This protein binds directly to 26S ribosomal RNA. Its function is as follows. Component of the ribosome, a large ribonucleoprotein complex responsible for the synthesis of proteins in the cell. The small ribosomal subunit (SSU) binds messenger RNAs (mRNAs) and translates the encoded message by selecting cognate aminoacyl-transfer RNA (tRNA) molecules. The large subunit (LSU) contains the ribosomal catalytic site termed the peptidyl transferase center (PTC), which catalyzes the formation of peptide bonds, thereby polymerizing the amino acids delivered by tRNAs into a polypeptide chain. The nascent polypeptides leave the ribosome through a tunnel in the LSU and interact with protein factors that function in enzymatic processing, targeting, and the membrane insertion of nascent chains at the exit of the ribosomal tunnel. This is Large ribosomal subunit protein uL11A (rpl1201) from Schizosaccharomyces pombe (strain 972 / ATCC 24843) (Fission yeast).